A 442-amino-acid chain; its full sequence is Chromosomal replication initiator protein DnaA (442 aa).

The interval 1–75 (MDAWPRCLER…GNGEVALAVG (75 aa)) is domain I, interacts with DnaA modulators. The tract at residues 75 to 104 (GSRPRAPEPAPAAAAVPSAPQAAPMVPFAG) is domain II. The domain III, AAA+ region stretch occupies residues 105–322 (NLDSHYTFAN…GALNTLVARA (218 aa)). Positions 150, 152, 153, and 154 each coordinate ATP. Residues 323–442 (NFTGRSITVE…WEKLIRKLSE (120 aa)) form a domain IV, binds dsDNA region.

This sequence belongs to the DnaA family. Oligomerizes as a right-handed, spiral filament on DNA at oriC.

It is found in the cytoplasm. Functionally, plays an essential role in the initiation and regulation of chromosomal replication. ATP-DnaA binds to the origin of replication (oriC) to initiate formation of the DNA replication initiation complex once per cell cycle. Binds the DnaA box (a 9 base pair repeat at the origin) and separates the double-stranded (ds)DNA. Forms a right-handed helical filament on oriC DNA; dsDNA binds to the exterior of the filament while single-stranded (ss)DNA is stabiized in the filament's interior. The ATP-DnaA-oriC complex binds and stabilizes one strand of the AT-rich DNA unwinding element (DUE), permitting loading of DNA polymerase. After initiation quickly degrades to an ADP-DnaA complex that is not apt for DNA replication. Binds acidic phospholipids. This Xanthomonas euvesicatoria pv. vesicatoria (strain 85-10) (Xanthomonas campestris pv. vesicatoria) protein is Chromosomal replication initiator protein DnaA.